Reading from the N-terminus, the 99-residue chain is Integration host factor subunit alpha (99 aa).

This sequence belongs to the bacterial histone-like protein family. Heterodimer of an alpha and a beta chain.

This protein is one of the two subunits of integration host factor, a specific DNA-binding protein that functions in genetic recombination as well as in transcriptional and translational control. The polypeptide is Integration host factor subunit alpha (Psychrobacter cryohalolentis (strain ATCC BAA-1226 / DSM 17306 / VKM B-2378 / K5)).